We begin with the raw amino-acid sequence, 284 residues long: tRNA uridine(34) hydroxylase (284 aa).

The Rhodanese domain maps to 132–226 (AGRPVVMLDT…YFEEVGGAHY (95 aa)). Cys-186 (cysteine persulfide intermediate) is an active-site residue.

Belongs to the TrhO family.

The enzyme catalyses uridine(34) in tRNA + AH2 + O2 = 5-hydroxyuridine(34) in tRNA + A + H2O. Functionally, catalyzes oxygen-dependent 5-hydroxyuridine (ho5U) modification at position 34 in tRNAs. The polypeptide is tRNA uridine(34) hydroxylase (Burkholderia cenocepacia (strain HI2424)).